Here is a 146-residue protein sequence, read N- to C-terminus: Leptin (146 aa).

An intrachain disulfide couples Cys-96 to Cys-146.

The protein belongs to the leptin family.

It is found in the secreted. Functionally, key player in the regulation of energy balance and body weight control. Once released into the circulation, has central and peripheral effects by binding LEPR, found in many tissues, which results in the activation of several major signaling pathways. In the hypothalamus, acts as an appetite-regulating factor that induces a decrease in food intake and an increase in energy consumption by inducing anorexinogenic factors and suppressing orexigenic neuropeptides, also regulates bone mass and secretion of hypothalamo-pituitary-adrenal hormones. In the periphery, increases basal metabolism, influences reproductive function, regulates pancreatic beta-cell function and insulin secretion, is pro-angiogenic for endothelial cell and affects innate and adaptive immunity. In the arcuate nucleus of the hypothalamus, activates by depolarization POMC neurons inducing FOS and SOCS3 expression to release anorexigenic peptides and inhibits by hyperpolarization NPY neurons inducing SOCS3 with a consequent reduction on release of orexigenic peptides. In addition to its known satiety inducing effect, has a modulatory role in nutrient absorption. In the intestine, reduces glucose absorption by enterocytes by activating PKC and leading to a sequential activation of p38, PI3K and ERK signaling pathways which exerts an inhibitory effect on glucose absorption. Acts as a growth factor on certain tissues, through the activation of different signaling pathways increases expression of genes involved in cell cycle regulation such as CCND1, via JAK2-STAT3 pathway, or VEGFA, via MAPK1/3 and PI3K-AKT1 pathways. May also play an apoptotic role via JAK2-STAT3 pathway and up-regulation of BIRC5 expression. Pro-angiogenic, has mitogenic activity on vascular endothelial cells and plays a role in matrix remodeling by regulating the expression of matrix metalloproteinases (MMPs) and tissue inhibitors of metalloproteinases (TIMPs). In innate immunity, modulates the activity and function of neutrophils by increasing chemotaxis and the secretion of oxygen radicals. Increases phagocytosis by macrophages and enhances secretion of pro-inflammatory mediators. Increases cytotoxic ability of NK cells. Plays a pro-inflammatory role, in synergy with IL1B, by inducing NOS2 which promotes the production of IL6, IL8 and Prostaglandin E2, through a signaling pathway that involves JAK2, PI3K, MAP2K1/MEK1 and MAPK14/p38. In adaptive immunity, promotes the switch of memory T-cells towards T helper-1 cell immune responses. Increases CD4(+)CD25(-) T-cell proliferation and reduces autophagy during TCR (T-cell receptor) stimulation, through MTOR signaling pathway activation and BCL2 up-regulation. The sequence is that of Leptin (LEP) from Pongo pygmaeus (Bornean orangutan).